The primary structure comprises 378 residues: ATP phosphoribosyltransferase regulatory subunit (378 aa).

This sequence belongs to the class-II aminoacyl-tRNA synthetase family. HisZ subfamily. Heteromultimer composed of HisG and HisZ subunits.

The protein resides in the cytoplasm. Its pathway is amino-acid biosynthesis; L-histidine biosynthesis; L-histidine from 5-phospho-alpha-D-ribose 1-diphosphate: step 1/9. Functionally, required for the first step of histidine biosynthesis. May allow the feedback regulation of ATP phosphoribosyltransferase activity by histidine. This is ATP phosphoribosyltransferase regulatory subunit from Brucella abortus (strain 2308).